We begin with the raw amino-acid sequence, 144 residues long: uncharacterized protein (144 aa).

The helical transmembrane segment at 25–47 (LTLLDGCCVALVLALTAWSGFFV) threads the bilayer.

It localises to the membrane. This is an uncharacterized protein from Treponema pallidum (strain Nichols).